Reading from the N-terminus, the 267-residue chain is Glutamate racemase (267 aa).

Residues 10–11 (DS) and 42–43 (YG) each bind substrate. Cysteine 73 functions as the Proton donor/acceptor in the catalytic mechanism. Substrate is bound at residue 74–75 (NT). The active-site Proton donor/acceptor is cysteine 183. Residue 184-185 (TH) coordinates substrate.

It belongs to the aspartate/glutamate racemases family.

The catalysed reaction is L-glutamate = D-glutamate. Its pathway is cell wall biogenesis; peptidoglycan biosynthesis. Provides the (R)-glutamate required for cell wall biosynthesis. This chain is Glutamate racemase, found in Limosilactobacillus reuteri (strain DSM 20016) (Lactobacillus reuteri).